A 229-amino-acid polypeptide reads, in one-letter code: Enolase-phosphatase E1 (229 aa).

Residues 207–229 are disordered; that stretch reads RDPASHHPQVQRFDDIHPEQIPA. A compositionally biased stretch (basic and acidic residues) spans 218 to 229; sequence RFDDIHPEQIPA.

The protein belongs to the HAD-like hydrolase superfamily. MasA/MtnC family. Monomer. Mg(2+) serves as cofactor.

The enzyme catalyses 5-methylsulfanyl-2,3-dioxopentyl phosphate + H2O = 1,2-dihydroxy-5-(methylsulfanyl)pent-1-en-3-one + phosphate. It functions in the pathway amino-acid biosynthesis; L-methionine biosynthesis via salvage pathway; L-methionine from S-methyl-5-thio-alpha-D-ribose 1-phosphate: step 3/6. The protein operates within amino-acid biosynthesis; L-methionine biosynthesis via salvage pathway; L-methionine from S-methyl-5-thio-alpha-D-ribose 1-phosphate: step 4/6. Bifunctional enzyme that catalyzes the enolization of 2,3-diketo-5-methylthiopentyl-1-phosphate (DK-MTP-1-P) into the intermediate 2-hydroxy-3-keto-5-methylthiopentenyl-1-phosphate (HK-MTPenyl-1-P), which is then dephosphorylated to form the acireductone 1,2-dihydroxy-3-keto-5-methylthiopentene (DHK-MTPene). The sequence is that of Enolase-phosphatase E1 from Klebsiella pneumoniae subsp. pneumoniae (strain ATCC 700721 / MGH 78578).